Consider the following 427-residue polypeptide: Clusterin-associated protein 1 homolog (427 aa).

Positions 202-307 form a coiled coil; sequence LLNNVSSDEA…LKEEEKRLMR (106 aa). Basic and acidic residues predominate over residues 300 to 313; that stretch reads EEEKRLMRSGVARD. The interval 300-427 is disordered; the sequence is EEEKRLMRSG…QILEESDNDF (128 aa). Acidic residues-rich tracts occupy residues 314–332 and 363–400; these read EDSD…DIDD and SEET…DNDS.

The protein belongs to the CLUAP1 family.

The protein resides in the nucleus. The protein localises to the cell projection. It is found in the cilium. Its function is as follows. Required for cilia biogenesis and maintenance in the kidney, the lateral line organ and eye. Appears to function within the multiple intraflagellar transport complex B (IFT-B). This is Clusterin-associated protein 1 homolog (cluap1) from Danio rerio (Zebrafish).